The chain runs to 349 residues: Small ribosomal subunit biogenesis GTPase RsgA 2 (349 aa).

One can recognise a CP-type G domain in the interval 97–252 (AEQLIATNVD…IIDTPGMREL (156 aa)). Residues 142–145 (TKAD) and 194–202 (GSSGVGKST) contribute to the GTP site. 4 residues coordinate Zn(2+): Cys275, Cys280, His282, and Cys288.

This sequence belongs to the TRAFAC class YlqF/YawG GTPase family. RsgA subfamily. In terms of assembly, monomer. Associates with 30S ribosomal subunit, binds 16S rRNA. It depends on Zn(2+) as a cofactor.

It localises to the cytoplasm. Functionally, one of several proteins that assist in the late maturation steps of the functional core of the 30S ribosomal subunit. Helps release RbfA from mature subunits. May play a role in the assembly of ribosomal proteins into the subunit. Circularly permuted GTPase that catalyzes slow GTP hydrolysis, GTPase activity is stimulated by the 30S ribosomal subunit. This is Small ribosomal subunit biogenesis GTPase RsgA 2 from Vibrio vulnificus (strain CMCP6).